The sequence spans 237 residues: Lycopene beta-cyclase (237 aa).

Transmembrane regions (helical) follow at residues 3–23 (TSYLTFLAVAVGPPLVALGVV), 38–58 (VGILLALALSYTTPWDNYLIA), 80–100 (EYLFVITQTLLTGLWVQALPL), 113–133 (AVLGALAGVLVGCGGAVLLTV), 137–157 (FYIGAIIAWAAPVLALQWAVG), 170–192 (AAVLVPTLFLSAADRYAIADGIW), and 213–233 (AFFFVTNVFVSQGLILYAWVL).

Belongs to the lycopene beta-cyclase family.

The protein resides in the cell membrane. The enzyme catalyses a carotenoid psi-end group = a carotenoid beta-end derivative. The catalysed reaction is all-trans-lycopene = gamma-carotene. It carries out the reaction gamma-carotene = all-trans-beta-carotene. It functions in the pathway carotenoid biosynthesis; beta-carotene biosynthesis. Its function is as follows. Catalyzes the cyclization of both ends of lycopene to form beta-carotene, a retinal precursor. Is required for bacteriorhodopsin biogenesis, a light-driven proton pump with a covalently bound retinal cofactor. The polypeptide is Lycopene beta-cyclase (Halobacterium salinarum (strain ATCC 29341 / DSM 671 / R1)).